The primary structure comprises 482 residues: MFS-type transporter cnsL (482 aa).

Residues 73 to 93 (LFVCATLSGLDKTAISAAAVY) traverse the membrane as a helical segment. N-linked (GlcNAc...) asparagine glycosylation occurs at asparagine 100. The next 9 helical transmembrane spans lie at 108–128 (WIGS…AYCL), 131–151 (VPAV…EMSV), 170–190 (IILN…VGYY), 199–219 (IIFL…YFVL), 304–324 (LLAM…SYLA), 333–353 (AIVT…YALP), 361–381 (LVGL…VSVY), 392–412 (ITLY…GPQT), and 426–446 (VAMI…GVVC).

This sequence belongs to the major facilitator superfamily. Allantoate permease family.

Its subcellular location is the cell membrane. Functionally, MFS-type transporter; part of the gene cluster that mediates the biosynthesis of communesins, a prominent class of indole alkaloids with great potential as pharmaceuticals. With the MFS transporter cnsO, is most likely responsible for cummunesins secretion and thereby may contribute to intrinsic resistance. This is MFS-type transporter cnsL from Penicillium expansum (Blue mold rot fungus).